Reading from the N-terminus, the 1765-residue chain is RANBP2-like and GRIP domain-containing protein 5/6 (1765 aa).

Thr19 is subject to Phosphothreonine. Phosphoserine is present on Ser21. 3 TPR repeats span residues 26–59 (SMKG…QERD), 60–93 (PKAH…NPTQ), and 648–681 (EDAH…VSYW). 2 disordered regions span residues 760–804 (GPLY…PRWT) and 924–945 (FGIS…NDTG). A compositionally biased stretch (low complexity) spans 778-797 (STPSPTKYSLSPSKSYKYSP). Residues 931 to 941 (NQEKKREKPLE) show a composition bias toward basic and acidic residues. In terms of domain architecture, RanBD1 1 spans 1036 to 1172 (HFEPVVQMPE…FEECQRLLLD (137 aa)). 2 disordered regions span residues 1214–1247 (KVTE…PTLE) and 1306–1330 (AKLN…EERD). The segment covering 1235–1244 (IKPNAENTGP) has biased composition (polar residues). The segment covering 1317–1329 (TDEESVVTQEEER) has biased composition (acidic residues). One can recognise a RanBD1 2 domain in the interval 1333-1469 (YFEPVVPLPD…FDEAKTAQEK (137 aa)). The span at 1580 to 1593 (NNSETSSVAQSGSE) shows a compositional bias: polar residues. Positions 1580-1621 (NNSETSSVAQSGSESKVEPKKCELSKNSDIEQSSDSKVKNLS) are disordered. Residues 1594–1617 (SKVEPKKCELSKNSDIEQSSDSKV) are compositionally biased toward basic and acidic residues. The 51-residue stretch at 1702–1752 (REKSAANLEYLKNVLLQFIFLKPGSERERLLPVINTMLQLSPEEKGKLAAV) folds into the GRIP domain.

In terms of tissue distribution, expressed in testis.

Its subcellular location is the cytoplasm. The chain is RANBP2-like and GRIP domain-containing protein 5/6 (RGPD5) from Homo sapiens (Human).